A 280-amino-acid polypeptide reads, in one-letter code: Pantothenate synthetase (280 aa).

ATP is bound at residue Met-30–His-37. His-37 serves as the catalytic Proton donor. Residue Gln-61 coordinates (R)-pantoate. Residue Gln-61 coordinates beta-alanine. Residue Gly-147–Asp-150 coordinates ATP. Gln-153 lines the (R)-pantoate pocket. Residues Val-176 and Met-184–Arg-187 contribute to the ATP site.

Belongs to the pantothenate synthetase family. As to quaternary structure, homodimer.

The protein localises to the cytoplasm. The catalysed reaction is (R)-pantoate + beta-alanine + ATP = (R)-pantothenate + AMP + diphosphate + H(+). It participates in cofactor biosynthesis; (R)-pantothenate biosynthesis; (R)-pantothenate from (R)-pantoate and beta-alanine: step 1/1. In terms of biological role, catalyzes the condensation of pantoate with beta-alanine in an ATP-dependent reaction via a pantoyl-adenylate intermediate. This is Pantothenate synthetase from Thermotoga petrophila (strain ATCC BAA-488 / DSM 13995 / JCM 10881 / RKU-1).